Here is a 323-residue protein sequence, read N- to C-terminus: o-succinylbenzoate synthase (323 aa).

K134 acts as the Proton donor in catalysis. D162, E191, and D214 together coordinate Mg(2+). K236 serves as the catalytic Proton acceptor.

It belongs to the mandelate racemase/muconate lactonizing enzyme family. MenC type 1 subfamily. A divalent metal cation is required as a cofactor.

The enzyme catalyses (1R,6R)-6-hydroxy-2-succinyl-cyclohexa-2,4-diene-1-carboxylate = 2-succinylbenzoate + H2O. It participates in quinol/quinone metabolism; 1,4-dihydroxy-2-naphthoate biosynthesis; 1,4-dihydroxy-2-naphthoate from chorismate: step 4/7. It functions in the pathway quinol/quinone metabolism; menaquinone biosynthesis. Its function is as follows. Converts 2-succinyl-6-hydroxy-2,4-cyclohexadiene-1-carboxylate (SHCHC) to 2-succinylbenzoate (OSB). The polypeptide is o-succinylbenzoate synthase (Edwardsiella ictaluri (strain 93-146)).